A 337-amino-acid polypeptide reads, in one-letter code: Large ribosomal subunit protein uL10 (337 aa).

The disordered stretch occupies residues Glu309–Gly337. The segment covering Glu310–Asp327 has biased composition (acidic residues).

This sequence belongs to the universal ribosomal protein uL10 family. As to quaternary structure, part of the 50S ribosomal subunit. Forms part of the ribosomal stalk which helps the ribosome interact with GTP-bound translation factors. Forms a heptameric L10(L12)2(L12)2(L12)2 complex, where L10 forms an elongated spine to which the L12 dimers bind in a sequential fashion.

Functionally, forms part of the ribosomal stalk, playing a central role in the interaction of the ribosome with GTP-bound translation factors. This chain is Large ribosomal subunit protein uL10, found in Methanococcoides burtonii (strain DSM 6242 / NBRC 107633 / OCM 468 / ACE-M).